The chain runs to 438 residues: Aspartate--tRNA(Asp) ligase (438 aa).

Position 170 (Glu170) interacts with L-aspartate. The segment at 192–195 (QLYK) is aspartate. An L-aspartate-binding site is contributed by Arg214. ATP contacts are provided by residues 214–216 (RAE), 222–224 (RHL), and Glu361. Positions 361 and 364 each coordinate Mg(2+). L-aspartate-binding residues include Ser364 and Arg368. Residue 409–412 (GAER) participates in ATP binding.

This sequence belongs to the class-II aminoacyl-tRNA synthetase family. Type 2 subfamily. In terms of assembly, homodimer. Requires Mg(2+) as cofactor.

The protein localises to the cytoplasm. It catalyses the reaction tRNA(Asp) + L-aspartate + ATP = L-aspartyl-tRNA(Asp) + AMP + diphosphate. In terms of biological role, catalyzes the attachment of L-aspartate to tRNA(Asp) in a two-step reaction: L-aspartate is first activated by ATP to form Asp-AMP and then transferred to the acceptor end of tRNA(Asp). The protein is Aspartate--tRNA(Asp) ligase of Pyrococcus furiosus (strain ATCC 43587 / DSM 3638 / JCM 8422 / Vc1).